The following is a 414-amino-acid chain: MSSPDAGYASDDQSQTQSALPAVMAGLGPCPWAESLSPIGDMKVKGEAPANSGAPAGAAGRAKGESRIRRPMNAFMVWAKDERKRLAQQNPDLHNAELSKMLGKSWKALTLAEKRPFVEEAERLRVQHMQDHPNYKYRPRRRKQVKRLKRVEGGFLHGLAEPQAAALGPEGGRVAMDGLGLQFPEQGFPAGPPLLPPHMGGHYRDCQSLGAPPLDGYPLPTPDTSPLDGVDPDPAFFAAPMPGDCPAAGTYSYAQVSDYAGPPEPPAGPMHPRLGPEPAGPSIPGLLAPPSALHVYYGAMGSPGAGGGRGFQMQPQHQHQHQHQHHPPGPGQPSPPPEALPCRDGTDPSQPAELLGEVDRTEFEQYLHFVCKPEMGLPYQGHDSGVNLPDSHGAISSVVSDASSAVYYCNYPDV.

Disordered stretches follow at residues 1–22 (MSSP…ALPA) and 36–66 (LSPI…KGES). The span at 47–61 (EAPANSGAPAGAAGR) shows a compositional bias: low complexity. A DNA-binding region (HMG box) is located at residues 68 to 136 (IRRPMNAFMV…QHMQDHPNYK (69 aa)). 2 disordered regions span residues 256-286 (VSDY…IPGL) and 305-352 (AGGG…SQPA). In terms of domain architecture, Sox C-terminal spans 280-413 (GPSIPGLLAP…SAVYYCNYPD (134 aa)). A compositionally biased stretch (pro residues) spans 327–339 (PPGPGQPSPPPEA). Positions 361–369 (TEFEQYLHF) match the 9aaTAD motif.

Interacts with CTNNB1, LEF1 and TCF4. In terms of tissue distribution, expressed in adult heart, lung, spleen, testis, ovary, placenta, fetal lung, and kidney. In normal gastrointestinal tract, it is preferentially expressed in esophagus, stomach and small intestine than in colon and rectum.

Its subcellular location is the nucleus. Its function is as follows. Acts as a transcription regulator that binds target promoter DNA and bends the DNA. Binds to the sequences 5'-AACAAT-'3 or 5'-AACAAAG-3'. Modulates transcriptional regulation via WNT3A. Inhibits Wnt signaling. Promotes degradation of activated CTNNB1. Plays a key role in the regulation of embryonic development. Required for normal development of the definitive gut endoderm. Required for normal looping of the embryonic heart tube. Plays an important role in embryonic and postnatal vascular development, including development of arteries. Plays an important role in postnatal angiogenesis, where it is functionally redundant with SOX18. Required for the generation and maintenance of fetal hematopoietic stem cells, and for fetal hematopoiesis. Probable transcriptional activator in the premeiotic germ cells. The polypeptide is Transcription factor SOX-17 (SOX17) (Homo sapiens (Human)).